The primary structure comprises 598 residues: Thiol:disulfide interchange protein DsbD (598 aa).

The N-terminal stretch at 1 to 19 is a signal peptide; that stretch reads MAYRIITLILLLCSTSATA. Cysteine 122 and cysteine 128 are disulfide-bonded. Residues 147–187 are disordered; the sequence is DGQATAIEPMPSTSSRPAFNPPLPVEPRPAPELATSPAPAA. Positions 165 to 176 are enriched in pro residues; that stretch reads FNPPLPVEPRPA. 7 helical membrane-spanning segments follow: residues 197 to 217, 242 to 262, 277 to 297, 330 to 350, 356 to 376, 391 to 411, and 423 to 443; these read LPFTALWALLIGIGIAFTPCV, LLAFIYVQGMALTYTALGLVV, YVLVGLSAVFILLALSMFGLF, IAGLICSPCTTAPLSAILLYI, LWLGGGTLYLYALGMGLPLIL, WMSHVKTAFGFVILALPVFLL, and LWSMLGVAFFSWAFITSLGAT. Cysteine 216 and cysteine 338 form a disulfide bridge. The Thioredoxin domain maps to 459-598; sequence LVSARPLQDW…FSAHLRDWQA (140 aa). A disulfide bridge links cysteine 513 with cysteine 516.

Belongs to the thioredoxin family. DsbD subfamily.

It is found in the cell inner membrane. The catalysed reaction is [protein]-dithiol + NAD(+) = [protein]-disulfide + NADH + H(+). It carries out the reaction [protein]-dithiol + NADP(+) = [protein]-disulfide + NADPH + H(+). Its function is as follows. Required to facilitate the formation of correct disulfide bonds in some periplasmic proteins and for the assembly of the periplasmic c-type cytochromes. Acts by transferring electrons from cytoplasmic thioredoxin to the periplasm. This transfer involves a cascade of disulfide bond formation and reduction steps. In Klebsiella pneumoniae subsp. pneumoniae (strain ATCC 700721 / MGH 78578), this protein is Thiol:disulfide interchange protein DsbD.